The chain runs to 329 residues: MKIAIDAMGGDHAPKEIVLGAMKAVQHFSDVHITLFGDEGKIRPYLTSDERITVIHTNEVIEATDEPVRAVRRKKQSSMVLMAEEVKEGRADACISAGNTGALMAAGLFVVGRIAGIDRPALAPTLPTIGGEGFLFLDVGANVDARPEHLLQYALMGAVYAEKVRGIPRPRIGLLNVGTEDQKGNDVAKKAFQLLRETDLNFIGNVEARDLLHGVADVVVTDGFTGNVALKTIEGTAISVFSMLKEALTSSFLSKLAAAILKPKLIDLKKTMDYSEYGGAALFGLNAPVVKAHGSSDANAIFHAVRQAREMVANDIITTIKEAIEQNHS.

Belongs to the PlsX family. As to quaternary structure, homodimer. Probably interacts with PlsY.

It is found in the cytoplasm. The enzyme catalyses a fatty acyl-[ACP] + phosphate = an acyl phosphate + holo-[ACP]. It functions in the pathway lipid metabolism; phospholipid metabolism. Functionally, catalyzes the reversible formation of acyl-phosphate (acyl-PO(4)) from acyl-[acyl-carrier-protein] (acyl-ACP). This enzyme utilizes acyl-ACP as fatty acyl donor, but not acyl-CoA. The polypeptide is Phosphate acyltransferase (Geobacillus sp. (strain WCH70)).